The chain runs to 353 residues: Photosystem II protein D1 (353 aa).

At T2 the chain carries N-acetylthreonine. Phosphothreonine is present on T2. The next 3 membrane-spanning stretches (helical) occupy residues 29–46, 118–133, and 142–156; these read YIGW…TATS, HFLL…EWEL, and WIAV…AATA. H118 is a binding site for chlorophyll a. Residue Y126 participates in pheophytin a binding. [CaMn4O5] cluster is bound by residues D170 and E189. Residues 197–218 form a helical membrane-spanning segment; that stretch reads FHMLGVAGVFGGSLFSAMHGSL. H198 contacts chlorophyll a. A quinone-binding positions include H215 and 264–265; that span reads SF. Residue H215 coordinates Fe cation. A Fe cation-binding site is contributed by H272. Residues 274–288 form a helical membrane-spanning segment; the sequence is FLAAWPVVGIWFTAL. Residues H332, E333, D342, and A344 each coordinate [CaMn4O5] cluster. A propeptide spanning residues 345-353 is cleaved from the precursor; that stretch reads AVEAPSTNG.

This sequence belongs to the reaction center PufL/M/PsbA/D family. In terms of assembly, PSII is composed of 1 copy each of membrane proteins PsbA, PsbB, PsbC, PsbD, PsbE, PsbF, PsbH, PsbI, PsbJ, PsbK, PsbL, PsbM, PsbT, PsbX, PsbY, PsbZ, Psb30/Ycf12, at least 3 peripheral proteins of the oxygen-evolving complex and a large number of cofactors. It forms dimeric complexes. The D1/D2 heterodimer binds P680, chlorophylls that are the primary electron donor of PSII, and subsequent electron acceptors. It shares a non-heme iron and each subunit binds pheophytin, quinone, additional chlorophylls, carotenoids and lipids. D1 provides most of the ligands for the Mn4-Ca-O5 cluster of the oxygen-evolving complex (OEC). There is also a Cl(-1) ion associated with D1 and D2, which is required for oxygen evolution. The PSII complex binds additional chlorophylls, carotenoids and specific lipids. is required as a cofactor. Post-translationally, tyr-161 forms a radical intermediate that is referred to as redox-active TyrZ, YZ or Y-Z. C-terminally processed by CTPA; processing is essential to allow assembly of the oxygen-evolving complex and thus photosynthetic growth.

It is found in the plastid. It localises to the chloroplast thylakoid membrane. The enzyme catalyses 2 a plastoquinone + 4 hnu + 2 H2O = 2 a plastoquinol + O2. Functionally, photosystem II (PSII) is a light-driven water:plastoquinone oxidoreductase that uses light energy to abstract electrons from H(2)O, generating O(2) and a proton gradient subsequently used for ATP formation. It consists of a core antenna complex that captures photons, and an electron transfer chain that converts photonic excitation into a charge separation. The D1/D2 (PsbA/PsbD) reaction center heterodimer binds P680, the primary electron donor of PSII as well as several subsequent electron acceptors. This Oenothera parviflora (Small-flowered evening primrose) protein is Photosystem II protein D1.